The chain runs to 110 residues: METLAQHRQARSSAQKVRLIVDLIRGKKVPQALNILTYTNKKAAFLVKKVVESAVANAEHNDGADIDKLRIKKIFVNEGSTMKRMMPRAKGRADRILKRTSHITVIVSDR.

The protein belongs to the universal ribosomal protein uL22 family. In terms of assembly, part of the 50S ribosomal subunit.

In terms of biological role, this protein binds specifically to 23S rRNA; its binding is stimulated by other ribosomal proteins, e.g. L4, L17, and L20. It is important during the early stages of 50S assembly. It makes multiple contacts with different domains of the 23S rRNA in the assembled 50S subunit and ribosome. Functionally, the globular domain of the protein is located near the polypeptide exit tunnel on the outside of the subunit, while an extended beta-hairpin is found that lines the wall of the exit tunnel in the center of the 70S ribosome. This chain is Large ribosomal subunit protein uL22, found in Buchnera aphidicola subsp. Acyrthosiphon pisum (strain 5A).